We begin with the raw amino-acid sequence, 369 residues long: 4beta-methylsterol monooxygenase (369 aa).

Residues 29–135 (WYVVEIDGRL…VKAQWGLIWL (107 aa)) enclose the Rieske domain. [2Fe-2S] cluster-binding residues include cysteine 70, histidine 72, cysteine 89, and histidine 92.

Requires [2Fe-2S] cluster as cofactor.

It carries out the reaction a 3beta-hydroxy-4,4-dimethylsteroid + 3 NADH + 3 O2 + 2 H(+) = a 3beta-hydroxy-4alpha-methylsteroid-4beta-carboxylate + 3 NAD(+) + 4 H2O. The enzyme catalyses 4,4-dimethyl-5alpha-cholesta-8,24-dien-3beta-ol + 3 NADH + 3 O2 + 2 H(+) = 4beta-carboxy-4alpha-methyl-5alpha-cholesta-8,24-dien-3beta-ol + 3 NAD(+) + 4 H2O. It catalyses the reaction a 3beta-hydroxy-4,4-dimethylsteroid + NADH + O2 + H(+) = a 3beta-hydroxy-4beta-hydroxymethyl-4alpha-methylsteroid + NAD(+) + H2O. The catalysed reaction is a 3beta-hydroxy-4beta-hydroxymethyl-4alpha-methylsteroid + NADH + O2 + H(+) = a 3beta-hydroxy-4beta-formyl-4alpha-methylsteroid + NAD(+) + 2 H2O. It carries out the reaction a 3beta-hydroxy-4beta-formyl-4alpha-methylsteroid + NADH + O2 = a 3beta-hydroxy-4alpha-methylsteroid-4beta-carboxylate + NAD(+) + H2O. The enzyme catalyses 4,4-dimethyl-5alpha-cholesta-8,24-dien-3beta-ol + NADH + O2 + H(+) = 4beta-hydroxymethyl-4alpha-methylzymosterol + NAD(+) + H2O. It catalyses the reaction 4beta-hydroxymethyl-4alpha-methylzymosterol + NADH + O2 + H(+) = 4beta-formylmethyl-4alpha-methyl-5alpha-cholesta-8,24-dien-3beta-ol + NAD(+) + 2 H2O. The catalysed reaction is 4beta-formylmethyl-4alpha-methyl-5alpha-cholesta-8,24-dien-3beta-ol + NADH + O2 = 4beta-carboxy-4alpha-methyl-5alpha-cholesta-8,24-dien-3beta-ol + NAD(+) + H2O. The protein operates within steroid biosynthesis; sterol biosynthesis. Its function is as follows. Participates in the biosynthesis of bacterial sterols. Together with SdmB, removes one methyl group from the C-4 position of 4,4-dimethylated steroid molecules. SdmA oxidizes the sterol 4beta-methyl group into first a hydroxyl, then an aldehyde and finally a carboxylic acid group. The polypeptide is 4beta-methylsterol monooxygenase (Methylococcus capsulatus (strain ATCC 33009 / NCIMB 11132 / Bath)).